The sequence spans 215 residues: Histidine biosynthesis bifunctional protein HisIE (215 aa).

Residues 1 to 118 form a phosphoribosyl-AMP cyclohydrolase region; that stretch reads MTKSISIEHL…YKNDVALLQI (118 aa). Residues 119 to 215 form a phosphoribosyl-ATP pyrophosphohydrolase region; sequence IPQVSAKIKE…HVEKEGQQRE (97 aa).

In the N-terminal section; belongs to the PRA-CH family. It in the C-terminal section; belongs to the PRA-PH family.

The protein localises to the cytoplasm. The enzyme catalyses 1-(5-phospho-beta-D-ribosyl)-ATP + H2O = 1-(5-phospho-beta-D-ribosyl)-5'-AMP + diphosphate + H(+). It catalyses the reaction 1-(5-phospho-beta-D-ribosyl)-5'-AMP + H2O = 1-(5-phospho-beta-D-ribosyl)-5-[(5-phospho-beta-D-ribosylamino)methylideneamino]imidazole-4-carboxamide. Its pathway is amino-acid biosynthesis; L-histidine biosynthesis; L-histidine from 5-phospho-alpha-D-ribose 1-diphosphate: step 2/9. It participates in amino-acid biosynthesis; L-histidine biosynthesis; L-histidine from 5-phospho-alpha-D-ribose 1-diphosphate: step 3/9. The protein is Histidine biosynthesis bifunctional protein HisIE of Oceanobacillus iheyensis (strain DSM 14371 / CIP 107618 / JCM 11309 / KCTC 3954 / HTE831).